Reading from the N-terminus, the 363-residue chain is 3-isopropylmalate dehydrogenase (363 aa).

Residue 77 to 90 coordinates NAD(+); the sequence is GPKWQHLPPDQQPE. Substrate-binding residues include Arg98, Arg108, Arg137, and Asp226. Residues Asp226, Asp250, and Asp254 each coordinate Mg(2+). 284 to 296 contacts NAD(+); it reads GSAPDIAGKNIAN.

This sequence belongs to the isocitrate and isopropylmalate dehydrogenases family. LeuB type 1 subfamily. As to quaternary structure, homodimer. It depends on Mg(2+) as a cofactor. Mn(2+) is required as a cofactor.

The protein resides in the cytoplasm. The catalysed reaction is (2R,3S)-3-isopropylmalate + NAD(+) = 4-methyl-2-oxopentanoate + CO2 + NADH. It functions in the pathway amino-acid biosynthesis; L-leucine biosynthesis; L-leucine from 3-methyl-2-oxobutanoate: step 3/4. Its function is as follows. Catalyzes the oxidation of 3-carboxy-2-hydroxy-4-methylpentanoate (3-isopropylmalate) to 3-carboxy-4-methyl-2-oxopentanoate. The product decarboxylates to 4-methyl-2 oxopentanoate. In Buchnera aphidicola subsp. Pemphigus spyrothecae, this protein is 3-isopropylmalate dehydrogenase.